A 553-amino-acid chain; its full sequence is General alpha-glucoside permease (553 aa).

Residues 1–21 (MSVDENQLENGQLLSSENEAS) show a composition bias toward polar residues. Residues 1-26 (MSVDENQLENGQLLSSENEASSPFKE) form a disordered region. Residues 1-33 (MSVDENQLENGQLLSSENEASSPFKESIPSRSS) lie on the Cytoplasmic side of the membrane. Residues 34 to 54 (LYLIALTVSLLGVQLTWSVEL) form a helical membrane-spanning segment. The Extracellular segment spans residues 55-72 (GYGTPYLFSLGLRKEWTS). Residues 73–93 (IIWIAGPLTGILIQPIAGILS) traverse the membrane as a helical segment. The Cytoplasmic portion of the chain corresponds to 94–111 (DRVNSRIGRRRPFMLCAS). A helical membrane pass occupies residues 112-132 (LLGTFSLFLMGWAPDICLFIF). Over 133–140 (SNEVLMKR) the chain is Extracellular. Residues 141–161 (VTIVLATISIYLLDVAVNVVM) traverse the membrane as a helical segment. Over 162–186 (ASTRSLIVDSVRSDQQHEANSWAGR) the chain is Cytoplasmic. A helical transmembrane segment spans residues 187–207 (MIGVGNVLGYLLGYLPLYRIF). The Extracellular segment spans residues 208–216 (SFLNFTQLQ). The helical transmembrane segment at 217 to 237 (VFCVLASISLVLTVTITTIFV) threads the bilayer. Over 238–280 (SERRFPPVEHEKSVAGEIFEFFTTMRQSITALPFTLKRICFVQ) the chain is Cytoplasmic. A helical membrane pass occupies residues 281–301 (FFAYFGWFPFLFYITTYVGIL). Residues 302–322 (YLRHAPKGHEEDWDMATRQGS) lie on the Extracellular side of the membrane. Residues 323 to 343 (FALLLFAIISLAANTALPLLL) form a helical membrane-spanning segment. Over 344 to 424 (EDTEDDEEDE…SKVQIKGLTL (81 aa)) the chain is Cytoplasmic. Residues 368–399 (NDLGNIRTGTNTPRLGNLSETTSFRSENEPSR) are disordered. The segment covering 374–392 (RTGTNTPRLGNLSETTSFR) has biased composition (polar residues). The helical transmembrane segment at 425-445 (PILWLSSHVLFGVCMLSTIFL) threads the bilayer. Topologically, residues 446-452 (QTSWQAQ) are extracellular. Residues 453-473 (AMVAICGLSWACTLWIPYSLF) form a helical membrane-spanning segment. Topologically, residues 474-494 (SSEIGKLGLRESSGKMIGVHN) are cytoplasmic. The helical transmembrane segment at 495–515 (VFISAPQVLSTIIATIVFIQS) threads the bilayer. Residues 516–521 (EGSHRD) lie on the Extracellular side of the membrane. A helical transmembrane segment spans residues 522–542 (IADNSIAWVLRIGGISAFLAA). Residues 543–553 (YQCRHLLPINF) are Cytoplasmic-facing.

This sequence belongs to the glycoside-pentoside-hexuronide (GPH) cation symporter transporter (TC 2.A.2.4) family.

Its subcellular location is the membrane. In terms of biological role, responsible for the transport of maltose and sucrose into the cell, with the concomitant uptake of protons (symport system). This Schizosaccharomyces pombe (strain 972 / ATCC 24843) (Fission yeast) protein is General alpha-glucoside permease (sut1).